Consider the following 509-residue polypeptide: Protein disulfide-isomerase (509 aa).

An N-terminal signal peptide occupies residues 1–19; it reads MLSRALLCLALAWAARVGA. In terms of domain architecture, Thioredoxin 1 spans 20 to 136; that stretch reads DALEEEDNVL…IVNWLKKRTG (117 aa). Active-site nucleophile residues include Cys-55 and Cys-58. A disulfide bond links Cys-55 and Cys-58. Residue Lys-202 is modified to N6-acetyllysine. N6-succinyllysine occurs at positions 224 and 273. 2 positions are modified to phosphoserine: Ser-333 and Ser-359. The 143-residue stretch at 335–477 folds into the Thioredoxin 2 domain; the sequence is ELTAEKITQF…FKKFLESGGQ (143 aa). Active-site nucleophile residues include Cys-399 and Cys-402. A disulfide bond links Cys-399 and Cys-402. At Ser-429 the chain carries Phosphoserine. The short motif at 506-509 is the Prevents secretion from ER element; that stretch reads KDEL.

This sequence belongs to the protein disulfide isomerase family. As to quaternary structure, heterodimer; heterodimerizes with the protein microsomal triglyceride transfer MTTP. Homodimer. Monomers and homotetramers may also occur. Interacts with P4HA2, forming a heterotetramer consisting of 2 alpha subunits (P4HA2) and 2 beta (P4HB), where P4HB plays the role of a structural subunit; this tetramer catalyzes the formation of 4-hydroxyproline in collagen. Also constitutes the structural subunit of the microsomal triacylglycerol transfer protein MTTP in mammalian cells. Stabilizes both enzymes and retain them in the ER without contributing to the catalytic activity. Binds UBQLN1. Interacts with ERO1B. Interacts with ILDR2. Interacts with ERN1/IRE1A (via N-terminus); the interaction is enhanced by phosphorylation of P4HB by FAM20C in response to endoplasmic reticulum stress and results in attenuation of ERN1 activity. In terms of processing, phosphorylation of Ser-359 by FAM20C is induced by endoplasmic reticulum stress and results in a functional switch from oxidoreductase to molecular chaperone. It also promotes interaction with ERN1.

Its subcellular location is the endoplasmic reticulum. It is found in the endoplasmic reticulum lumen. The protein localises to the melanosome. The protein resides in the cell membrane. The catalysed reaction is Catalyzes the rearrangement of -S-S- bonds in proteins.. Functionally, this multifunctional protein catalyzes the formation, breakage and rearrangement of disulfide bonds. At the cell surface, seems to act as a reductase that cleaves disulfide bonds of proteins attached to the cell. May therefore cause structural modifications of exofacial proteins. Inside the cell, seems to form/rearrange disulfide bonds of nascent proteins. At high concentrations and following phosphorylation by FAM20C, functions as a chaperone that inhibits aggregation of misfolded proteins. At low concentrations, facilitates aggregation (anti-chaperone activity). May be involved with other chaperones in the structural modification of the TG precursor in hormone biogenesis. Also acts as a structural subunit of various enzymes such as prolyl 4-hydroxylase and microsomal triacylglycerol transfer protein MTTP. Receptor for LGALS9; the interaction retains P4HB at the cell surface of Th2 T helper cells, increasing disulfide reductase activity at the plasma membrane, altering the plasma membrane redox state and enhancing cell migration. The polypeptide is Protein disulfide-isomerase (P4hb) (Rattus norvegicus (Rat)).